Reading from the N-terminus, the 299-residue chain is Large ribosomal subunit protein eL22 (299 aa).

Disordered regions lie at residues 1–142 (MAPT…AAPA) and 155–178 (VAKP…KKNV). 2 stretches are compositionally biased toward basic and acidic residues: residues 33 to 42 (GKVEKPKAEA) and 55 to 64 (KASEAAKDVK). 2 stretches are compositionally biased toward low complexity: residues 65-98 (AAAA…AAAA) and 105-142 (AAAA…AAPA).

The protein belongs to the eukaryotic ribosomal protein eL22 family.

In Drosophila melanogaster (Fruit fly), this protein is Large ribosomal subunit protein eL22 (RpL22).